Consider the following 207-residue polypeptide: Small ribosomal subunit protein uS4 (207 aa).

The S4 RNA-binding domain maps to 96–156; the sequence is RRLDNVVYRL…EKFKTSSFIA (61 aa).

This sequence belongs to the universal ribosomal protein uS4 family. In terms of assembly, part of the 30S ribosomal subunit. Contacts protein S5. The interaction surface between S4 and S5 is involved in control of translational fidelity.

In terms of biological role, one of the primary rRNA binding proteins, it binds directly to 16S rRNA where it nucleates assembly of the body of the 30S subunit. Its function is as follows. With S5 and S12 plays an important role in translational accuracy. This Leptospira interrogans serogroup Icterohaemorrhagiae serovar copenhageni (strain Fiocruz L1-130) protein is Small ribosomal subunit protein uS4.